A 259-amino-acid chain; its full sequence is Dihydroorotate dehydrogenase B (NAD(+)), electron transfer subunit (259 aa).

The 101-residue stretch at 2-102 (MQKQNMIVVN…LGPLGHGFPV (101 aa)) folds into the FAD-binding FR-type domain. Residues 53-56 (RPIS), 70-72 (LYR), and 77-78 (GT) each bind FAD. [2Fe-2S] cluster-binding residues include Cys221, Cys226, Cys229, and Cys246.

Belongs to the PyrK family. Heterotetramer of 2 PyrK and 2 PyrD type B subunits. [2Fe-2S] cluster serves as cofactor. The cofactor is FAD.

The protein operates within pyrimidine metabolism; UMP biosynthesis via de novo pathway; orotate from (S)-dihydroorotate (NAD(+) route): step 1/1. Its function is as follows. Responsible for channeling the electrons from the oxidation of dihydroorotate from the FMN redox center in the PyrD type B subunit to the ultimate electron acceptor NAD(+). The polypeptide is Dihydroorotate dehydrogenase B (NAD(+)), electron transfer subunit (Bacillus cereus (strain G9842)).